The primary structure comprises 470 residues: MVLTEMSLDYSNRVLGSQKDNVKQMDKEETQQKENMLFSSQEYAAKLQKENMTLMKALAHRNKLVELSGIEIQKLRINLRSVQEKNLQLAQANSQMLAELNTNRDRLKDLQHELGCKNALLKVKKHLEEQVLPRTHHESKDKVSASASDGDCKSFQVHDIKHKDTKRKRTTRIKSSVSADVKPIPVNDSNSKANRKRRVSGVIDTTGIPEEICQTEDDIDKGVVSRGVNQDIDNVVNKKFVPDAANPVKESVHRKRQCTRRQSTRFDVQETKQTEKLLEMDGAKESKETASFSLRRRSARLRHEEAEPCKSLHEGDEVRETIKRRRVSLRLSARFDIQEPHVTETSNADDARSIVIEESAGSRSESVEPSESRHETKEITRKRSFSTRRQSTKGKSQTDEAIKEIATDPSLVNTIVQECDQETESKDKPKADENEGMTRRSSVGRPSRHAAEKVQSYREVSLRVKMRRKC.

Positions 72–113 form a coiled coil; it reads IQKLRINLRSVQEKNLQLAQANSQMLAELNTNRDRLKDLQHE. Composition is skewed to basic and acidic residues over residues 131-143 and 150-162; these read VLPR…KDKV and GDCK…DIKH. 2 disordered regions span residues 131–176 and 358–470; these read VLPR…IKSS and ESAG…RRKC. Over residues 163–172 the composition is skewed to basic residues; that stretch reads KDTKRKRTTR. Residues 370–381 show a composition bias toward basic and acidic residues; the sequence is SESRHETKEITR. Residues 382-392 are compositionally biased toward basic residues; sequence KRSFSTRRQST. Basic and acidic residues-rich tracts occupy residues 396–406, 423–438, and 449–462; these read SQTDEAIKEIA, TESK…EGMT, and HAAE…EVSL.

This sequence belongs to the shugoshin family.

Its function is as follows. Dispensable for both meiotic and mitotic cell cycle progression. Required with SGO1 for full protection of centromeric cohesion during anaphase I. Required to prevent precocious release of pericentromeric cohesins during meiosis. Acts redundantly to SGO1. This is SHUGOSHIN 2 from Arabidopsis thaliana (Mouse-ear cress).